A 154-amino-acid polypeptide reads, in one-letter code: UPF0225 protein SG1365 (154 aa).

This sequence belongs to the UPF0225 family.

The polypeptide is UPF0225 protein SG1365 (Sodalis glossinidius (strain morsitans)).